A 195-amino-acid chain; its full sequence is Small ribosomal subunit protein uS4c (195 aa).

The S4 RNA-binding domain occupies 82-143 (MRLDNILFRL…KQRSKALIQN (62 aa)).

It belongs to the universal ribosomal protein uS4 family. In terms of assembly, part of the 30S ribosomal subunit. Contacts protein S5. The interaction surface between S4 and S5 is involved in control of translational fidelity.

The protein localises to the plastid. It localises to the chloroplast. Its function is as follows. One of the primary rRNA binding proteins, it binds directly to 16S rRNA where it nucleates assembly of the body of the 30S subunit. With S5 and S12 plays an important role in translational accuracy. This is Small ribosomal subunit protein uS4c (rps4) from Watsonia angusta.